The primary structure comprises 448 residues: Ribonuclease J (448 aa).

H81, H83, D85, H86, H151, and D173 together coordinate Zn(2+). Position 383–387 (383–387) interacts with substrate; it reads HVSGH. H409 provides a ligand contact to Zn(2+).

The protein belongs to the metallo-beta-lactamase superfamily. RNA-metabolizing metallo-beta-lactamase-like family. Archaeal RNase J subfamily. Forms homodimers on heating to 60 degrees Celsius which may be the active form. Zn(2+) serves as cofactor.

The protein localises to the cytoplasm. Its activity is regulated as follows. Inhibited by imidazole. Functionally, a 5'-3' exoribonuclease with a strong reference for 5'-monophosphorylated RNA and no endoribonuclease activty. Also has robust 5'-'3 nuclease activity on single-stranded DNA (exodeoxyribonuclease, exoDNase). May be involved in RNA degradation. The polypeptide is Ribonuclease J (Methanocaldococcus jannaschii (strain ATCC 43067 / DSM 2661 / JAL-1 / JCM 10045 / NBRC 100440) (Methanococcus jannaschii)).